The following is a 155-amino-acid chain: Protein-export protein SecB (155 aa).

It belongs to the SecB family. As to quaternary structure, homotetramer, a dimer of dimers. One homotetramer interacts with 1 SecA dimer.

The protein resides in the cytoplasm. In terms of biological role, one of the proteins required for the normal export of preproteins out of the cell cytoplasm. It is a molecular chaperone that binds to a subset of precursor proteins, maintaining them in a translocation-competent state. It also specifically binds to its receptor SecA. The protein is Protein-export protein SecB of Paramagnetospirillum magneticum (strain ATCC 700264 / AMB-1) (Magnetospirillum magneticum).